The primary structure comprises 300 residues: Ribosomal protein L11 methyltransferase (300 aa).

T152, G173, D195, and N234 together coordinate S-adenosyl-L-methionine.

This sequence belongs to the methyltransferase superfamily. PrmA family.

It is found in the cytoplasm. The catalysed reaction is L-lysyl-[protein] + 3 S-adenosyl-L-methionine = N(6),N(6),N(6)-trimethyl-L-lysyl-[protein] + 3 S-adenosyl-L-homocysteine + 3 H(+). Methylates ribosomal protein L11. The chain is Ribosomal protein L11 methyltransferase from Burkholderia cenocepacia (strain HI2424).